A 302-amino-acid chain; its full sequence is Glutamate/aspartate import solute-binding protein (302 aa).

Residues 1-22 (MQLRKLTTAMLVMGLSAGLAHA) form the signal peptide.

Belongs to the bacterial solute-binding protein 3 family. As to quaternary structure, the complex is composed of two ATP-binding proteins (GltL), two transmembrane proteins (GltJ and GltK) and a solute-binding protein (GltI).

The protein localises to the periplasm. Its function is as follows. Part of the ABC transporter complex GltIJKL involved in glutamate and aspartate uptake. Binds to both glutamate and aspartate. The polypeptide is Glutamate/aspartate import solute-binding protein (gltI) (Salmonella typhimurium (strain LT2 / SGSC1412 / ATCC 700720)).